A 529-amino-acid chain; its full sequence is GMP synthase [glutamine-hydrolyzing] (529 aa).

The region spanning 16–205 (PVLVVDFGAQ…LHDFAGLDAD (190 aa)) is the Glutamine amidotransferase type-1 domain. Cys93 functions as the Nucleophile in the catalytic mechanism. Residues His179 and Glu181 contribute to the active site. Residues 206 to 403 (WTAANIAGVL…LDLPEEIVAR (198 aa)) form the GMPS ATP-PPase domain. 233–239 (SGGVDSA) contributes to the ATP binding site.

As to quaternary structure, homodimer.

The catalysed reaction is XMP + L-glutamine + ATP + H2O = GMP + L-glutamate + AMP + diphosphate + 2 H(+). The protein operates within purine metabolism; GMP biosynthesis; GMP from XMP (L-Gln route): step 1/1. Catalyzes the synthesis of GMP from XMP. In Mycobacterium leprae (strain Br4923), this protein is GMP synthase [glutamine-hydrolyzing].